The chain runs to 156 residues: Ribosomal RNA large subunit methyltransferase H (156 aa).

Residues Leu73, Gly104, and 123–128 each bind S-adenosyl-L-methionine; that span reads LSPLTL.

This sequence belongs to the RNA methyltransferase RlmH family. In terms of assembly, homodimer.

It is found in the cytoplasm. The enzyme catalyses pseudouridine(1915) in 23S rRNA + S-adenosyl-L-methionine = N(3)-methylpseudouridine(1915) in 23S rRNA + S-adenosyl-L-homocysteine + H(+). Specifically methylates the pseudouridine at position 1915 (m3Psi1915) in 23S rRNA. This is Ribosomal RNA large subunit methyltransferase H from Aliivibrio fischeri (strain ATCC 700601 / ES114) (Vibrio fischeri).